A 764-amino-acid polypeptide reads, in one-letter code: 5-methyltetrahydropteroyltriglutamate--homocysteine methyltransferase (764 aa).

5-methyltetrahydropteroyltri-L-glutamate is bound by residues 16–19 (RELK) and Lys-112. L-homocysteine contacts are provided by residues 431-433 (IGS) and Glu-484. L-methionine is bound by residues 431–433 (IGS) and Glu-484. 5-methyltetrahydropteroyltri-L-glutamate is bound by residues 515 to 516 (RC) and Trp-561. Residue Asp-599 coordinates L-homocysteine. Asp-599 contributes to the L-methionine binding site. Residue Glu-605 coordinates 5-methyltetrahydropteroyltri-L-glutamate. Zn(2+) contacts are provided by His-641, Cys-643, and Glu-665. His-694 functions as the Proton donor in the catalytic mechanism. Zn(2+) is bound at residue Cys-726.

It belongs to the vitamin-B12 independent methionine synthase family. It depends on Zn(2+) as a cofactor.

The catalysed reaction is 5-methyltetrahydropteroyltri-L-glutamate + L-homocysteine = tetrahydropteroyltri-L-glutamate + L-methionine. It participates in amino-acid biosynthesis; L-methionine biosynthesis via de novo pathway; L-methionine from L-homocysteine (MetE route): step 1/1. Functionally, catalyzes the transfer of a methyl group from 5-methyltetrahydrofolate to homocysteine resulting in methionine formation. This Paraburkholderia phytofirmans (strain DSM 17436 / LMG 22146 / PsJN) (Burkholderia phytofirmans) protein is 5-methyltetrahydropteroyltriglutamate--homocysteine methyltransferase.